A 371-amino-acid chain; its full sequence is Peptide chain release factor 2 (371 aa).

Gln253 carries the N5-methylglutamine modification.

It belongs to the prokaryotic/mitochondrial release factor family. Post-translationally, methylated by PrmC. Methylation increases the termination efficiency of RF2.

Its subcellular location is the cytoplasm. Peptide chain release factor 2 directs the termination of translation in response to the peptide chain termination codons UGA and UAA. The sequence is that of Peptide chain release factor 2 from Mycobacterium marinum (strain ATCC BAA-535 / M).